Here is a 443-residue protein sequence, read N- to C-terminus: Large ribosomal subunit protein mL50 (443 aa).

The segment at 121–145 (QPTRADAPEKIRDPNYEPATSGAGL) is disordered. Residues 126–135 (DAPEKIRDPN) are compositionally biased toward basic and acidic residues.

It belongs to the mitochondrion-specific ribosomal protein mL50 family. In terms of assembly, component of the mitochondrial large ribosomal subunit (mt-LSU). Mature N.crassa 74S mitochondrial ribosomes consist of a small (37S) and a large (54S) subunit. The 37S small subunit contains a 16S ribosomal RNA (16S mt-rRNA) and 32 different proteins. The 54S large subunit contains a 23S rRNA (23S mt-rRNA) and 42 different proteins.

Its subcellular location is the mitochondrion. Its function is as follows. Component of the mitochondrial ribosome (mitoribosome), a dedicated translation machinery responsible for the synthesis of mitochondrial genome-encoded proteins, including at least some of the essential transmembrane subunits of the mitochondrial respiratory chain. The mitoribosomes are attached to the mitochondrial inner membrane and translation products are cotranslationally integrated into the membrane. This chain is Large ribosomal subunit protein mL50 (mrpl13), found in Neurospora crassa (strain ATCC 24698 / 74-OR23-1A / CBS 708.71 / DSM 1257 / FGSC 987).